The chain runs to 104 residues: Ribonuclease P protein component 4 (104 aa).

Cysteine 57, cysteine 60, cysteine 83, and cysteine 86 together coordinate Zn(2+).

Belongs to the eukaryotic/archaeal RNase P protein component 4 family. As to quaternary structure, consists of a catalytic RNA component and at least 4-5 protein subunits. Zn(2+) is required as a cofactor.

The protein resides in the cytoplasm. The catalysed reaction is Endonucleolytic cleavage of RNA, removing 5'-extranucleotides from tRNA precursor.. Functionally, part of ribonuclease P, a protein complex that generates mature tRNA molecules by cleaving their 5'-ends. The protein is Ribonuclease P protein component 4 of Saccharolobus islandicus (strain M.16.27) (Sulfolobus islandicus).